The sequence spans 142 residues: Profilin (142 aa).

This sequence belongs to the profilin family. In terms of assembly, occurs in many kinds of cells as a complex with monomeric actin in a 1:1 ratio. As to expression, expressed specifically in coelomocytes in response to injury.

Its subcellular location is the cytoplasm. It is found in the cytoskeleton. In terms of biological role, binds to actin and affects the structure of the cytoskeleton. At high concentrations, profilin prevents the polymerization of actin, whereas it enhances it at low concentrations. By binding to PIP2, it inhibits the formation of IP3 and DG. The chain is Profilin from Strongylocentrotus purpuratus (Purple sea urchin).